Reading from the N-terminus, the 419-residue chain is Peptide chain release factor subunit 1 (419 aa).

The protein belongs to the eukaryotic release factor 1 family. Heterodimer of two subunits, one of which binds GTP.

The protein resides in the cytoplasm. In terms of biological role, directs the termination of nascent peptide synthesis (translation) in response to the termination codons UAA, UAG and UGA. This is Peptide chain release factor subunit 1 from Methanococcus maripaludis (strain C5 / ATCC BAA-1333).